Consider the following 238-residue polypeptide: Ribonuclease PH (238 aa).

Phosphate is bound by residues arginine 86 and 124 to 126 (GTR).

The protein belongs to the RNase PH family. In terms of assembly, homohexameric ring arranged as a trimer of dimers.

It catalyses the reaction tRNA(n+1) + phosphate = tRNA(n) + a ribonucleoside 5'-diphosphate. Its function is as follows. Phosphorolytic 3'-5' exoribonuclease that plays an important role in tRNA 3'-end maturation. Removes nucleotide residues following the 3'-CCA terminus of tRNAs; can also add nucleotides to the ends of RNA molecules by using nucleoside diphosphates as substrates, but this may not be physiologically important. Probably plays a role in initiation of 16S rRNA degradation (leading to ribosome degradation) during starvation. The polypeptide is Ribonuclease PH (Maricaulis maris (strain MCS10) (Caulobacter maris)).